A 176-amino-acid chain; its full sequence is NADH-quinone oxidoreductase subunit I 2 (176 aa).

4Fe-4S ferredoxin-type domains are found at residues 45–77 and 87–116; these read IVLT…MEAA and RWFR…MTPD. The [4Fe-4S] cluster site is built by cysteine 57, cysteine 60, cysteine 63, cysteine 67, cysteine 96, cysteine 99, cysteine 102, and cysteine 106.

The protein belongs to the complex I 23 kDa subunit family. In terms of assembly, NDH-1 is composed of 14 different subunits. Subunits NuoA, H, J, K, L, M, N constitute the membrane sector of the complex. [4Fe-4S] cluster is required as a cofactor.

Its subcellular location is the cell inner membrane. The catalysed reaction is a quinone + NADH + 5 H(+)(in) = a quinol + NAD(+) + 4 H(+)(out). In terms of biological role, NDH-1 shuttles electrons from NADH, via FMN and iron-sulfur (Fe-S) centers, to quinones in the respiratory chain. The immediate electron acceptor for the enzyme in this species is believed to be ubiquinone. Couples the redox reaction to proton translocation (for every two electrons transferred, four hydrogen ions are translocated across the cytoplasmic membrane), and thus conserves the redox energy in a proton gradient. This is NADH-quinone oxidoreductase subunit I 2 from Geobacter sulfurreducens (strain ATCC 51573 / DSM 12127 / PCA).